Consider the following 379-residue polypeptide: Cobalt-precorrin-5B C(1)-methyltransferase (379 aa).

The protein belongs to the CbiD family.

The catalysed reaction is Co-precorrin-5B + S-adenosyl-L-methionine = Co-precorrin-6A + S-adenosyl-L-homocysteine. The protein operates within cofactor biosynthesis; adenosylcobalamin biosynthesis; cob(II)yrinate a,c-diamide from sirohydrochlorin (anaerobic route): step 6/10. In terms of biological role, catalyzes the methylation of C-1 in cobalt-precorrin-5B to form cobalt-precorrin-6A. The chain is Cobalt-precorrin-5B C(1)-methyltransferase from Salmonella dublin (strain CT_02021853).